A 354-amino-acid chain; its full sequence is MLKNDRLLRALRRDTVDRTPIWLMRQAGRYLPEYRAARQHAGSFLKMAKTPELACEITLQPLRRFPLDAAILFSDILMIPDAMGLELHFIEGEGPRLGKPIRDAAAITQLAVPDMETELRYVMDAVRLIRKELDNSVPLIGFSGSPWTLACYMIEGGSSKEYARIKAMAFNAPDVLHQLLNTVTDAVISYLAAQRAAGAQALQVFDTWGGILSPTMYRTFSLPYLTRIARELERGTGTEHTPLVLFGKGNGPYIAELAMSGTEAVGVDWTIELEDAARRSNGQVALQGNLDPATLYGTPNNIAREVQRTLDSYAAGNGGSREGHVFNLGHGMTPGMNPDHVSALVEAVQRLSRR.

Substrate is bound by residues 25-29 (RQAGR), F44, D75, Y152, T207, and H330.

The protein belongs to the uroporphyrinogen decarboxylase family. In terms of assembly, homodimer.

The protein resides in the cytoplasm. It catalyses the reaction uroporphyrinogen III + 4 H(+) = coproporphyrinogen III + 4 CO2. It functions in the pathway porphyrin-containing compound metabolism; protoporphyrin-IX biosynthesis; coproporphyrinogen-III from 5-aminolevulinate: step 4/4. Catalyzes the decarboxylation of four acetate groups of uroporphyrinogen-III to yield coproporphyrinogen-III. In Xylella fastidiosa (strain Temecula1 / ATCC 700964), this protein is Uroporphyrinogen decarboxylase.